The primary structure comprises 398 residues: Putative isocitrate lyase subunit B (398 aa).

Belongs to the isocitrate lyase/PEP mutase superfamily. Isocitrate lyase family. The cofactor is Mg(2+).

It carries out the reaction D-threo-isocitrate = glyoxylate + succinate. Its function is as follows. Together with AceAa, they could catalyze the formation of succinate and glyoxylate from isocitrate. In Mycobacterium tuberculosis (strain ATCC 25618 / H37Rv), this protein is Putative isocitrate lyase subunit B (aceAb).